The primary structure comprises 65 residues: Toxin Cbi1 (65 aa).

One can recognise an LCN-type CS-alpha/beta domain in the interval 1 to 64 (KDGYPMDNKG…VWDRATNKCR (64 aa)). Cystine bridges form between Cys11/Cys63, Cys15/Cys37, Cys22/Cys44, and Cys26/Cys46.

This sequence belongs to the long (4 C-C) scorpion toxin superfamily. Sodium channel inhibitor family. Beta subfamily. In terms of tissue distribution, expressed by the venom gland.

It is found in the secreted. Functionally, beta toxins bind voltage-independently at site-4 of sodium channels (Nav) and shift the voltage of activation toward more negative potentials thereby affecting sodium channel activation and promoting spontaneous and repetitive firing. The chain is Toxin Cbi1 from Centruroides bicolor (Scorpion).